A 240-amino-acid polypeptide reads, in one-letter code: T4 protein (240 aa).

Belongs to the poxviruses B9 family.

The polypeptide is T4 protein (Sheeppox virus (strain KS-1) (SPPV)).